A 188-amino-acid chain; its full sequence is Peroxynitrite isomerase (188 aa).

Residues 35 to 41 (GTWRGEG) carry the GXWXGXG motif. His-178 is a binding site for heme b.

The protein belongs to the nitrobindin family. Homodimer. Heme b is required as a cofactor.

The catalysed reaction is peroxynitrite = nitrate. The protein operates within nitrogen metabolism. Functionally, heme-binding protein able to scavenge peroxynitrite and to protect free L-tyrosine against peroxynitrite-mediated nitration, by acting as a peroxynitrite isomerase that converts peroxynitrite to nitrate. Therefore, this protein likely plays a role in peroxynitrite sensing and in the detoxification of reactive nitrogen and oxygen species (RNS and ROS, respectively). Is able to bind nitric oxide (NO) in vitro, but may act as a sensor of peroxynitrite levels in vivo. The protein is Peroxynitrite isomerase of Frankia casuarinae (strain DSM 45818 / CECT 9043 / HFP020203 / CcI3).